Here is a 141-residue protein sequence, read N- to C-terminus: Nucleoside diphosphate kinase (141 aa).

ATP contacts are provided by lysine 11, phenylalanine 59, arginine 87, threonine 93, arginine 104, and asparagine 114.

Belongs to the NDK family. Homotetramer. The cofactor is Mg(2+).

It is found in the cytoplasm. The enzyme catalyses a 2'-deoxyribonucleoside 5'-diphosphate + ATP = a 2'-deoxyribonucleoside 5'-triphosphate + ADP. It carries out the reaction a ribonucleoside 5'-diphosphate + ATP = a ribonucleoside 5'-triphosphate + ADP. Functionally, major role in the synthesis of nucleoside triphosphates other than ATP. The ATP gamma phosphate is transferred to the NDP beta phosphate via a ping-pong mechanism, using a phosphorylated active-site intermediate. The chain is Nucleoside diphosphate kinase from Saccharophagus degradans (strain 2-40 / ATCC 43961 / DSM 17024).